The primary structure comprises 489 residues: Rhamnulokinase (489 aa).

13–17 (ASSGR) is an ATP binding site. C68 and C222 form a disulfide bridge. Residues G83 and 236-238 (HDT) contribute to the substrate site. The active-site Proton acceptor is D237. T259 contacts ATP. N296 contacts substrate. Q304 is a binding site for ATP. A disulfide bond links C353 and C370. G402 serves as a coordination point for ATP. An intrachain disulfide couples C413 to C417.

The protein belongs to the rhamnulokinase family. As to quaternary structure, monomer. It depends on Mg(2+) as a cofactor.

It catalyses the reaction L-rhamnulose + ATP = L-rhamnulose 1-phosphate + ADP + H(+). The protein operates within carbohydrate degradation; L-rhamnose degradation; glycerone phosphate from L-rhamnose: step 2/3. Involved in the catabolism of L-rhamnose (6-deoxy-L-mannose). Catalyzes the transfer of the gamma-phosphate group from ATP to the 1-hydroxyl group of L-rhamnulose to yield L-rhamnulose 1-phosphate. This is Rhamnulokinase from Escherichia coli O9:H4 (strain HS).